The primary structure comprises 157 residues: Peroxiredoxin Bcp (157 aa).

Positions 3 to 156 (IEIGQKAPDL…ALQTLKDMSE (154 aa)) constitute a Thioredoxin domain. Cys45 (cysteine sulfenic acid (-SOH) intermediate) is an active-site residue. An intrachain disulfide couples Cys45 to Cys50.

The protein belongs to the peroxiredoxin family. BCP/PrxQ subfamily. Monomer.

The catalysed reaction is a hydroperoxide + [thioredoxin]-dithiol = an alcohol + [thioredoxin]-disulfide + H2O. Functionally, thiol-specific peroxidase that catalyzes the reduction of hydrogen peroxide and organic hydroperoxides to water and alcohols, respectively. Plays a role in cell protection against oxidative stress by detoxifying peroxides and as sensor of hydrogen peroxide-mediated signaling events. This Bacillus subtilis (strain 168) protein is Peroxiredoxin Bcp (ygaF).